Consider the following 305-residue polypeptide: Glutaminase (305 aa).

Positions 61, 113, 158, 165, 189, 241, and 259 each coordinate substrate.

It belongs to the glutaminase family. Homotetramer.

It catalyses the reaction L-glutamine + H2O = L-glutamate + NH4(+). In Clostridium botulinum (strain ATCC 19397 / Type A), this protein is Glutaminase.